A 309-amino-acid polypeptide reads, in one-letter code: Tagatose-6-phosphate kinase (309 aa).

It belongs to the carbohydrate kinase PfkB family. LacC subfamily.

It carries out the reaction D-tagatofuranose 6-phosphate + ATP = D-tagatofuranose 1,6-bisphosphate + ADP + H(+). The protein operates within carbohydrate metabolism; D-tagatose 6-phosphate degradation; D-glyceraldehyde 3-phosphate and glycerone phosphate from D-tagatose 6-phosphate: step 1/2. This is Tagatose-6-phosphate kinase from Streptococcus pyogenes serotype M2 (strain MGAS10270).